Here is a 141-residue protein sequence, read N- to C-terminus: Hemoglobin subunit mu (141 aa).

Residues 1–141 form the Globin domain; that stretch reads MLSAQERAQI…VAVVLTEKYR (141 aa). 2 residues coordinate heme b: H58 and H87.

This sequence belongs to the globin family. As to expression, expressed in erythroid tissues.

This is Hemoglobin subunit mu (HBM) from Homo sapiens (Human).